A 442-amino-acid chain; its full sequence is tRNA modification GTPase MnmE (442 aa).

Positions 21, 79, and 118 each coordinate (6S)-5-formyl-5,6,7,8-tetrahydrofolate. Residues 214 to 367 (GFKIAIVGKP…LKEELQNYLN (154 aa)) enclose the TrmE-type G domain. Position 224 (N224) interacts with K(+). Residues 224 to 229 (NVGKSS), 243 to 249 (SDIAGTT), and 268 to 271 (DTAG) contribute to the GTP site. Position 228 (S228) interacts with Mg(2+). Positions 243, 245, and 248 each coordinate K(+). T249 serves as a coordination point for Mg(2+). K442 lines the (6S)-5-formyl-5,6,7,8-tetrahydrofolate pocket.

Belongs to the TRAFAC class TrmE-Era-EngA-EngB-Septin-like GTPase superfamily. TrmE GTPase family. In terms of assembly, homodimer. Heterotetramer of two MnmE and two MnmG subunits. K(+) is required as a cofactor.

It is found in the cytoplasm. Functionally, exhibits a very high intrinsic GTPase hydrolysis rate. Involved in the addition of a carboxymethylaminomethyl (cmnm) group at the wobble position (U34) of certain tRNAs, forming tRNA-cmnm(5)s(2)U34. The protein is tRNA modification GTPase MnmE of Campylobacter jejuni (strain RM1221).